A 304-amino-acid polypeptide reads, in one-letter code: Rhodopsin (304 aa).

Residues 1–13 (YEYPQYYLVNPAA) are Extracellular-facing. A helical transmembrane segment spans residues 14 to 38 (YAALGAYMFLLILVGFPINFLTLYV). Residues 39–50 (TIEHKKLRTPLN) lie on the Cytoplasmic side of the membrane. A helical membrane pass occupies residues 51–73 (YILLNLAVANLFMVFGGFTTTMF). At 74-87 (TSIRGYFVLGHLGC) the chain is on the extracellular side. A disulfide bridge links Cys-87 with Cys-164. The chain crosses the membrane as a helical span at residues 88–110 (NLEGFFATLSGEIALWSLVVLAI). Positions 111–113 (ERW) match the 'Ionic lock' involved in activated form stabilization motif. The Cytoplasmic segment spans residues 111-129 (ERWVVVCKPISNFRFGENH). Residues 130 to 150 (AIMGLAFTWTMAMACAAPPLV) traverse the membrane as a helical segment. At 151–179 (GWSRYIPEGMQCSCGIDYYTRAEGFNNES) the chain is on the extracellular side. A glycan (N-linked (GlcNAc...) asparagine) is linked at Asn-177. A helical transmembrane segment spans residues 180-201 (FVVYMFTCHFMTPLTIVFFCYG). Residues 202–229 (RLLCAVKEAAAAQQESETTQRAEREVTR) lie on the Cytoplasmic side of the membrane. A helical transmembrane segment spans residues 230-251 (MVVIMVIAFLICWCPYAGVAWF). Topologically, residues 252–263 (IFTHQGSEFGPV) are extracellular. Residues 264–285 (FMTIPAFFAKSSSIYNPMIYIC) form a helical membrane-spanning segment. Residue Lys-273 is modified to N6-(retinylidene)lysine. Residues 286–304 (LNKQFRHCMITTLCCGKKA) lie on the Cytoplasmic side of the membrane. Residues Cys-299 and Cys-300 are each lipidated (S-palmitoyl cysteine).

This sequence belongs to the G-protein coupled receptor 1 family. Opsin subfamily. In terms of processing, phosphorylated on some or all of the serine and threonine residues present in the C-terminal region. Contains one covalently linked retinal chromophore.

The protein resides in the membrane. Its subcellular location is the cell projection. The protein localises to the cilium. It is found in the photoreceptor outer segment. Functionally, photoreceptor required for image-forming vision at low light intensity. While most salt water fish species use retinal as chromophore, most freshwater fish use 3-dehydroretinal, or a mixture of retinal and 3-dehydroretinal. Light-induced isomerization of 11-cis to all-trans retinal triggers a conformational change that activates signaling via G-proteins. Subsequent receptor phosphorylation mediates displacement of the bound G-protein alpha subunit by arrestin and terminates signaling. This is Rhodopsin (rho) from Ictalurus punctatus (Channel catfish).